The primary structure comprises 48 residues: FRGLAKLLKIGLKSFARVLKKILPKAAKAGKSLAKSLADENAIRQQNQ.

Its subcellular location is the secreted. It is found in the target cell membrane. In terms of biological role, disrupts cell membranes, particularly those rich in phosphocholine, through formation of pores. Has antimicrobial activity, hemolytic activity and insecticidal activity. This chain is M-oxotoxin-Ot1c, found in Oxyopes takobius (Lynx spider).